We begin with the raw amino-acid sequence, 348 residues long: Galactose-1-phosphate uridylyltransferase (348 aa).

Residue 28–31 (RAKR) participates in UDP-alpha-D-glucose binding. Zn(2+) is bound by residues C52 and C55. UDP-alpha-D-glucose contacts are provided by residues V61 and 77-78 (ND). H115 is a binding site for Zn(2+). Residues N153 and 159 to 161 (GCS) each bind UDP-alpha-D-glucose. H164 contacts Zn(2+). Catalysis depends on H166, which acts as the Tele-UMP-histidine intermediate. Residue Q168 participates in UDP-alpha-D-glucose binding. Residues E182, H281, H296, and H298 each coordinate Fe cation. UDP-alpha-D-glucose contacts are provided by residues 311-312 (KF), 316-317 (YE), and Q323.

Belongs to the galactose-1-phosphate uridylyltransferase type 1 family. In terms of assembly, homodimer. It depends on Zn(2+) as a cofactor.

It catalyses the reaction alpha-D-galactose 1-phosphate + UDP-alpha-D-glucose = alpha-D-glucose 1-phosphate + UDP-alpha-D-galactose. Its pathway is carbohydrate metabolism; galactose metabolism. In Escherichia coli (strain K12), this protein is Galactose-1-phosphate uridylyltransferase (galT).